Here is a 423-residue protein sequence, read N- to C-terminus: MTKRLQARRLDGIDQNLWVEFGKLTKEYDVVNLGQGFPDFSPPDFATQAFQQATSGNFMLNQYTRAFGYPPLTNVLASFFGKLLGQEMDPLTNVLVTVGAYGALFTRFQALVDEGDEVIIMEPAFDCYEPMTMMAGGCPVFVTLKPSPAPKGKLGASNDWQLDPAELASKFTPRTKILVLNTPNNPLGKVFSRMELELVANLCQQHDVVCISDEVYQWLVYDGHQHVSIASLPGMWDRTLTIGSAGKSFSATGWKVGWVMGPDNIMKHLRTVHQNSIFHCPTQAQAAVAQCFEREQQHFGQPSSYFLQLPQAMELNRDHMIRSLQSVGLKLWISQGSYFLIADISDFKSKMPDLPGAEDEPYDRRFAKWMIKNMGLVGIPVSTFFSRPHQKDFDHYIRFCFVKDKATLQAMDERLRKWKELQP.

Glycine 36 contacts substrate. Lysine 82 carries the N6-succinyllysine modification. A substrate-binding site is contributed by asparagine 185. At lysine 247 the chain carries N6-(pyridoxal phosphate)lysine. Arginine 398 lines the substrate pocket.

The protein belongs to the class-I pyridoxal-phosphate-dependent aminotransferase family. As to quaternary structure, homodimer. The cofactor is pyridoxal 5'-phosphate. In terms of tissue distribution, detected in kidney.

The protein localises to the cytoplasm. It is found in the cytosol. It localises to the mitochondrion matrix. The catalysed reaction is L-kynurenine + 2-oxoglutarate = kynurenate + L-glutamate + H2O. It carries out the reaction 3-phenylpyruvate + L-glutamine = 2-oxoglutaramate + L-phenylalanine. It catalyses the reaction an S-substituted L-cysteine + H2O = a thiol + pyruvate + NH4(+). Its pathway is amino-acid degradation; L-kynurenine degradation; kynurenate from L-kynurenine: step 1/2. With respect to regulation, inhibited by aminooxyacetate (in vitro). Functionally, catalyzes the irreversible transamination of the L-tryptophan metabolite L-kynurenine to form kynurenic acid (KA), an intermediate in the tryptophan catabolic pathway which is also a broad spectrum antagonist of the three ionotropic excitatory amino acid receptors among others. Metabolizes the cysteine conjugates of certain halogenated alkenes and alkanes to form reactive metabolites. Catalyzes the beta-elimination of S-conjugates and Se-conjugates of L-(seleno)cysteine, resulting in the cleavage of the C-S or C-Se bond. In Rattus norvegicus (Rat), this protein is Kynurenine--oxoglutarate transaminase 1.